The primary structure comprises 144 residues: Ferredoxin-thioredoxin reductase catalytic chain, chloroplastic (144 aa).

Residues 1–31 constitute a chloroplast transit peptide; that stretch reads MTTQASTFAVAVPSVATPFRRHRNPFVVRAQ. Cys-83 is a binding site for [4Fe-4S] cluster. Residue Cys-85 is the Nucleophile of the active site. A disulfide bond links Cys-85 and Cys-115. 3 residues coordinate [4Fe-4S] cluster: Cys-102, Cys-104, and Cys-113.

It belongs to the ferredoxin thioredoxin reductase beta subunit family. In terms of assembly, heterodimer of subunit A (variable subunit) and subunit B (catalytic subunit). Heterodimeric FTR forms a complex with ferredoxin and thioredoxin. It depends on [4Fe-4S] cluster as a cofactor.

The protein localises to the plastid. Its subcellular location is the chloroplast. The catalysed reaction is [thioredoxin]-disulfide + 2 reduced [2Fe-2S]-[ferredoxin] + 2 H(+) = [thioredoxin]-dithiol + 2 oxidized [2Fe-2S]-[ferredoxin]. Functionally, catalytic subunit of the ferredoxin-thioredoxin reductase (FTR), which catalyzes the two-electron reduction of thioredoxins by the electrons provided by reduced ferredoxin. The sequence is that of Ferredoxin-thioredoxin reductase catalytic chain, chloroplastic (FTRC) from Glycine max (Soybean).